Consider the following 245-residue polypeptide: tRNA1(Val) (adenine(37)-N6)-methyltransferase (245 aa).

This sequence belongs to the methyltransferase superfamily. tRNA (adenine-N(6)-)-methyltransferase family.

It localises to the cytoplasm. The catalysed reaction is adenosine(37) in tRNA1(Val) + S-adenosyl-L-methionine = N(6)-methyladenosine(37) in tRNA1(Val) + S-adenosyl-L-homocysteine + H(+). Its function is as follows. Specifically methylates the adenine in position 37 of tRNA(1)(Val) (anticodon cmo5UAC). This is tRNA1(Val) (adenine(37)-N6)-methyltransferase from Escherichia coli O157:H7 (strain EC4115 / EHEC).